The chain runs to 102 residues: Cytochrome b (102 aa).

3 helical membrane-spanning segments follow: residues 1 to 21, 45 to 66, and 81 to 101; these read FGSLLGLCLATQILTGLFLAM, WLIRNIHANGASFFFICIYLHI, and WNIGVVLLLLVMMTAFVGYVL. Heme b is bound by residues H51 and H65.

This sequence belongs to the cytochrome b family. In terms of assembly, the cytochrome bc1 complex contains 3 respiratory subunits (MT-CYB, CYC1 and UQCRFS1), 2 core proteins (UQCRC1 and UQCRC2) and probably 6 low-molecular weight proteins. Heme b is required as a cofactor.

It localises to the mitochondrion inner membrane. In terms of biological role, component of the ubiquinol-cytochrome c reductase complex (complex III or cytochrome b-c1 complex) that is part of the mitochondrial respiratory chain. The b-c1 complex mediates electron transfer from ubiquinol to cytochrome c. Contributes to the generation of a proton gradient across the mitochondrial membrane that is then used for ATP synthesis. The polypeptide is Cytochrome b (mt-cyb) (Megalops atlanticus (Tarpon)).